The primary structure comprises 46 residues: Light-harvesting protein B-800/850 beta 2 chain (46 aa).

At alanine 2–phenylalanine 25 the chain is on the cytoplasmic side. 2 residues coordinate a bacteriochlorophyll: histidine 18 and histidine 36. The chain crosses the membrane as a helical span at residues serine 26–phenylalanine 46.

It belongs to the antenna complex beta subunit family. In terms of assembly, the core complex is formed by different alpha and beta chains, binding bacteriochlorophyll molecules, and arranged most probably in tetrameric structures disposed around the reaction center.

Its subcellular location is the cell inner membrane. Functionally, antenna complexes are light-harvesting systems, which transfer the excitation energy to the reaction centers. The polypeptide is Light-harvesting protein B-800/850 beta 2 chain (B2) (Magnetospirillum molischianum (Rhodospirillum molischianum)).